The primary structure comprises 394 residues: Phosphoglycerate kinase (394 aa).

Substrate is bound by residues 21–23 (DFN), arginine 36, 59–62 (HLGR), arginine 118, and arginine 151. Serine 183 carries the phosphoserine modification. Position 201 (lysine 201) interacts with ATP. Position 299 is a phosphothreonine (threonine 299). ATP is bound by residues glutamate 323 and 350-353 (GGDS).

The protein belongs to the phosphoglycerate kinase family. As to quaternary structure, monomer.

It localises to the cytoplasm. The catalysed reaction is (2R)-3-phosphoglycerate + ATP = (2R)-3-phospho-glyceroyl phosphate + ADP. It functions in the pathway carbohydrate degradation; glycolysis; pyruvate from D-glyceraldehyde 3-phosphate: step 2/5. The polypeptide is Phosphoglycerate kinase (pgk) (Bacillus subtilis (strain 168)).